We begin with the raw amino-acid sequence, 829 residues long: Sodium/hydrogen exchanger 3 (829 aa).

The first 26 residues, 1–26 (MWHRALGPGWKLLLALALTSLQGARG), serve as a signal peptide directing secretion. The Extracellular segment spans residues 27-46 (AEEEPSSDGSFQVVTFKWHH). Residues 47-69 (VQDPYIIALWILVASLAKIVFHL) form a helical membrane-spanning segment. The Cytoplasmic portion of the chain corresponds to 70 to 77 (SHKVTSIV). The chain crosses the membrane as a helical span at residues 78–97 (PESALLIVLGLVLGGIVWAA). Residues 98–106 (DHIASFTLT) lie on the Extracellular side of the membrane. A helical transmembrane segment spans residues 107-124 (PTLFFFYLLPPIVLDAGY). Residues 125–127 (FMP) are Cytoplasmic-facing. Residues 128 to 163 (NRLFFGNLGTILLYAVIGTIWNAATTGLSLYGVFLS) traverse the membrane as a helical segment. A 1,2-diacyl-sn-glycero-3-phospho-(1D-myo-inositol) contacts are provided by glycine 133, glycine 136, and threonine 137. Topologically, residues 164–176 (GLMGELKIGLLDF) are extracellular. Residues 177–198 (LLFGSLIAAVDPVAVLAVFEEV) traverse the membrane as a helical segment. At 199 to 200 (HV) the chain is on the cytoplasmic side. A helical membrane pass occupies residues 201–232 (NEVLFIIVFGESLLNDAVTVVLYNVFESFVTL). Residues 233–239 (GGDAVTG) are Extracellular-facing. A helical membrane pass occupies residues 240–274 (VDCVKGIVSFFVVSLGGTLVGVIFAFLLSLVTRFT). At 275–276 (KH) the chain is on the cytoplasmic side. Residues 277 to 299 (VRIIEPGFVFVISYLSYLTSEML) traverse the membrane as a helical segment. Topologically, residues 300–301 (SL) are extracellular. Residues 302–318 (SSILAITFCGICCQKYV) form a helical membrane-spanning segment. Over 319 to 325 (KANISEQ) the chain is Cytoplasmic. The helical transmembrane segment at 326 to 354 (SATTVRYTMKMLASGAETIIFMFLGISAV) threads the bilayer. Topologically, residues 355–362 (NPDIWTWN) are extracellular. The helical transmembrane segment at 363-384 (TAFVLLTLVFISVYRAIGVVLQ) threads the bilayer. The Cytoplasmic portion of the chain corresponds to 385–397 (TWILNRYRMVQLE). Methionine 393 lines the a 1,2-diacyl-sn-glycero-3-phospho-(1D-myo-inositol) pocket. The helical transmembrane segment at 398-421 (TIDQVVMSYGGLRGAVAYALVVLL) threads the bilayer. Topologically, residues 422–428 (DEKKVKE) are extracellular. A helical membrane pass occupies residues 429-462 (KNLFVSTTLIVVFFTVIFQGLTIKPLVQWLKVKR). At 463–829 (SEHREPKLNE…QPAAPESTHM (367 aa)) the chain is on the cytoplasmic side. Residues glutamine 492, isoleucine 493, and histidine 495 each coordinate a 1,2-diacyl-sn-glycero-3-phospho-(1D-myo-inositol). A phosphoserine mark is found at serine 550 and serine 558. Residues 571 to 585 (RPSTVEASVSYFLRE) are interaction with EZR. The interaction with NHERF4 stretch occupies residues 586–663 (NVSAVCLDMQ…RKRLESFKSA (78 aa)). An interaction with AHCYL1 region spans residues 587 to 691 (VSAVCLDMQS…AQKRRNSSIP (105 aa)). Phosphoserine is present on residues serine 588 and serine 603. The residue at position 659 (serine 659) is a Phosphoserine; by SGK1. Over residues 677–687 (YKRERAQKRRN) the composition is skewed to basic residues. The tract at residues 677–696 (YKRERAQKRRNSSIPNGKLP) is disordered. 3 positions are modified to phosphoserine: serine 714, serine 805, and serine 808.

It belongs to the monovalent cation:proton antiporter 1 (CPA1) transporter (TC 2.A.36) family. In terms of assembly, homodimer. Found in the forms of complex and dynamic macromolecular complexes. Binds NHERF1 and NHERF2. Interacts with CHP1; this interaction increases trafficking and activity of SLC9A3 at the plasma membrane. Interacts with CHP2 and SHANK2. Interacts with PDZK1 (via C-terminal PDZ domain). Interacts with NHERF4 and interactions decrease in response to elevated calcium ion levels. Interacts with AHCYL1; the interaction is required for SLC9A3 activity. Interacts with EZR; interaction targets SLC9A3 to the apical membrane. Interacts with SNX27 (via PDZ domains); directs SLC9A3 membrane insertion from early endosomes to the plasma membrane. Phosphorylated by PKA, which inhibits activity. Phosphorylation at Ser-659 by SGK1 is associated with increased abundance at the cell membrane. Phosphorylation at Ser-714 by CSNK2A1 regulates SLC9A3 activity through the formation of multiple signaling complexes.

The protein localises to the apical cell membrane. It localises to the cell membrane. It is found in the recycling endosome membrane. Its subcellular location is the early endosome membrane. The enzyme catalyses Na(+)(in) + H(+)(out) = Na(+)(out) + H(+)(in). Its activity is regulated as follows. Seems to switch between active and inactive modes in response to various stimuli. Activated directly or indirectly by membrane phosphatidylinositol (PIs). Regulated by a variety of auxiliary proteins, which facilitate the maturation, cell surface expression and function of the transporter. Inhibited specifically by the drug tenapanor. Plasma membrane Na(+)/H(+) antiporter. Exchanges intracellular H(+) ions for extracellular Na(+) in 1:1 stoichiometry, playing a key role in salt and fluid absorption and pH homeostasis. Major apical Na(+)/H(+) exchanger in kidney and intestine playing an important role in renal and intestine Na(+) absorption and blood pressure regulation. The protein is Sodium/hydrogen exchanger 3 of Mus musculus (Mouse).